Here is a 609-residue protein sequence, read N- to C-terminus: Spore-specific protein YSW1 (609 aa).

The disordered stretch occupies residues Met-1–Thr-24. Ser-159 and Ser-160 each carry phosphoserine. Residues Asp-162–Pro-225 form a disordered region. Polar residues predominate over residues Thr-169–Lys-179. A compositionally biased stretch (basic and acidic residues) spans Leu-200–Glu-209. Residues Glu-210–Phe-219 are compositionally biased toward acidic residues.

This chain is Spore-specific protein YSW1 (YSW1), found in Saccharomyces cerevisiae (strain ATCC 204508 / S288c) (Baker's yeast).